We begin with the raw amino-acid sequence, 413 residues long: MSFRDLRNFTEMMRALGYPRHISMENFRTPNFGLVSEVLLWLVKRYEPQTDIPPDVDTEQDRVFFIKAIAQFMATKAHIKLNTKKLYQADGYAVKELLKITSVLYNAMKTKGMEGSEIVEEDVNKFKFDLGSKIADLKAARQLASEITSKGASLYDLLGMEVELREMRTEAIARPLEINETEKVMRIAIKEILTQVQKTKDLLNNVASDEANLEAKIEKRKLELERNRKRLETLQSVRPCFMDEYEKTEEELQKQYDTYLEKFQNLTYLEQQLEDHHRMEQERFEEAKNTLCLIQNKLKEEEKRLLKSGSNDDSDIDIQEDDESDSELEERRLPKPQTAMEMLMQGRPGKRIVGTMQGGDSDDNEDSEESEIDMEDDDDEDDDLEDESISLSPTKPNRRVRKSEPLDESDNDF.

Residues 198-291 are a coiled coil; sequence KTKDLLNNVA…ERFEEAKNTL (94 aa). The disordered stretch occupies residues 305-413; that stretch reads LLKSGSNDDS…EPLDESDNDF (109 aa). Acidic residues-rich tracts occupy residues 312–328 and 360–388; these read DDSD…DSEL and DSDD…EDES. Residues serine 314, serine 324, and serine 326 each carry the phosphoserine modification. The residue at position 409 (serine 409) is a Phosphoserine.

It belongs to the CLUAP1 family. As to quaternary structure, interacts with CLU/clusterin. Interacts with UBXN10; the interaction is direct. In terms of tissue distribution, expressed in testis, thyroid and trachea and to a lower extent in spinal cord and adrenal gland. Highly expressed in colon cancer and osteosarcoma cell lines.

It is found in the cell projection. The protein localises to the cilium. The protein resides in the nucleus. Its function is as follows. Required for cilia biogenesis. Appears to function within the multiple intraflagellar transport complex B (IFT-B). Key regulator of hedgehog signaling. The protein is Clusterin-associated protein 1 (CLUAP1) of Homo sapiens (Human).